Here is a 93-residue protein sequence, read N- to C-terminus: UPF0147 protein MJ1419 (93 aa).

This sequence belongs to the UPF0147 family.

The protein is UPF0147 protein MJ1419 of Methanocaldococcus jannaschii (strain ATCC 43067 / DSM 2661 / JAL-1 / JCM 10045 / NBRC 100440) (Methanococcus jannaschii).